A 195-amino-acid polypeptide reads, in one-letter code: Holliday junction branch migration complex subunit RuvA (195 aa).

Residues 1 to 64 form a domain I region; the sequence is MIGRIAGLLL…EDAHLLFGFM (64 aa). The segment at 65-140 is domain II; that stretch reads TEPERVLFRQ…KISPAITLPE (76 aa). The tract at residues 140–144 is flexible linker; sequence ETGTA. Residues 145 to 195 form a domain III region; it reads MASSTDKDILNALSALGYNDREANWAVGQLSEGVTVSDGIMQSLRLLSKAK.

It belongs to the RuvA family. Homotetramer. Forms an RuvA(8)-RuvB(12)-Holliday junction (HJ) complex. HJ DNA is sandwiched between 2 RuvA tetramers; dsDNA enters through RuvA and exits via RuvB. An RuvB hexamer assembles on each DNA strand where it exits the tetramer. Each RuvB hexamer is contacted by two RuvA subunits (via domain III) on 2 adjacent RuvB subunits; this complex drives branch migration. In the full resolvosome a probable DNA-RuvA(4)-RuvB(12)-RuvC(2) complex forms which resolves the HJ.

It is found in the cytoplasm. Functionally, the RuvA-RuvB-RuvC complex processes Holliday junction (HJ) DNA during genetic recombination and DNA repair, while the RuvA-RuvB complex plays an important role in the rescue of blocked DNA replication forks via replication fork reversal (RFR). RuvA specifically binds to HJ cruciform DNA, conferring on it an open structure. The RuvB hexamer acts as an ATP-dependent pump, pulling dsDNA into and through the RuvAB complex. HJ branch migration allows RuvC to scan DNA until it finds its consensus sequence, where it cleaves and resolves the cruciform DNA. The sequence is that of Holliday junction branch migration complex subunit RuvA from Nitrosomonas europaea (strain ATCC 19718 / CIP 103999 / KCTC 2705 / NBRC 14298).